Consider the following 59-residue polypeptide: Photosystem II reaction center protein K (59 aa).

The propeptide occupies 1–22; the sequence is MLNIFSLICLSSALHSSSFFFA. Residues 38–58 traverse the membrane as a helical segment; sequence MPVIPVLFFLLALVWQAAVSF.

Belongs to the PsbK family. In terms of assembly, PSII is composed of 1 copy each of membrane proteins PsbA, PsbB, PsbC, PsbD, PsbE, PsbF, PsbH, PsbI, PsbJ, PsbK, PsbL, PsbM, PsbT, PsbX, PsbY, PsbZ, Psb30/Ycf12, at least 3 peripheral proteins of the oxygen-evolving complex and a large number of cofactors. It forms dimeric complexes.

It localises to the plastid. Its subcellular location is the chloroplast thylakoid membrane. Its function is as follows. One of the components of the core complex of photosystem II (PSII). PSII is a light-driven water:plastoquinone oxidoreductase that uses light energy to abstract electrons from H(2)O, generating O(2) and a proton gradient subsequently used for ATP formation. It consists of a core antenna complex that captures photons, and an electron transfer chain that converts photonic excitation into a charge separation. The protein is Photosystem II reaction center protein K of Piper cenocladum (Ant piper).